Consider the following 77-residue polypeptide: Large ribosomal subunit protein uL24 (77 aa).

This sequence belongs to the universal ribosomal protein uL24 family. As to quaternary structure, part of the 50S ribosomal subunit.

Its function is as follows. One of two assembly initiator proteins, it binds directly to the 5'-end of the 23S rRNA, where it nucleates assembly of the 50S subunit. One of the proteins that surrounds the polypeptide exit tunnel on the outside of the subunit. The protein is Large ribosomal subunit protein uL24 of Campylobacter fetus subsp. fetus (strain 82-40).